A 478-amino-acid polypeptide reads, in one-letter code: UDP-N-acetylmuramate--L-alanine ligase (478 aa).

Residue 112 to 118 (GTHGKTT) coordinates ATP.

Belongs to the MurCDEF family.

The protein resides in the cytoplasm. It catalyses the reaction UDP-N-acetyl-alpha-D-muramate + L-alanine + ATP = UDP-N-acetyl-alpha-D-muramoyl-L-alanine + ADP + phosphate + H(+). It participates in cell wall biogenesis; peptidoglycan biosynthesis. Cell wall formation. In Polynucleobacter asymbioticus (strain DSM 18221 / CIP 109841 / QLW-P1DMWA-1) (Polynucleobacter necessarius subsp. asymbioticus), this protein is UDP-N-acetylmuramate--L-alanine ligase.